The following is a 545-amino-acid chain: Thermosome subunit alpha (545 aa).

The tract at residues 522–545 is disordered; sequence KKSTPPSGQGGQGQGMPGGGMPEY. Residues 529-545 show a composition bias toward gly residues; that stretch reads GQGGQGQGMPGGGMPEY.

This sequence belongs to the TCP-1 chaperonin family. Forms a Heterooligomeric complex of two stacked eight-membered rings. The N-terminus is blocked.

Its function is as follows. Molecular chaperone; binds unfolded polypeptides in vitro, and has a weak ATPase activity. The sequence is that of Thermosome subunit alpha (thsA) from Thermoplasma acidophilum (strain ATCC 25905 / DSM 1728 / JCM 9062 / NBRC 15155 / AMRC-C165).